The following is a 164-amino-acid chain: Cyanate hydratase (164 aa).

Catalysis depends on residues Arg-90, Glu-93, and Ser-116.

This sequence belongs to the cyanase family.

The enzyme catalyses cyanate + hydrogencarbonate + 3 H(+) = NH4(+) + 2 CO2. Catalyzes the reaction of cyanate with bicarbonate to produce ammonia and carbon dioxide. The polypeptide is Cyanate hydratase (Vitis vinifera (Grape)).